The chain runs to 677 residues: Pannexin-2 (677 aa).

Residues 11 to 53 (MATALLAGEKLRELILPGSQDDKAGALAALLLQLKLELPFDRV) are Cytoplasmic-facing. Residues 54 to 74 (VTIGTVLVPILLVTLVFTKNF) form a helical membrane-spanning segment. Topologically, residues 75 to 125 (AEEPIYCYTPHNFTRDQALYARGYCWTELRDALPGVDASLWPSLFEHKFLP) are extracellular. A glycan (N-linked (GlcNAc...) asparagine) is linked at Asn-86. Residues 126-146 (YALLAFAAIMYVPALGWEFLA) form a helical membrane-spanning segment. Over 147–230 (STRLTSELNF…NFLAKLYLAR (84 aa)) the chain is Cytoplasmic. Residues 231-251 (HVLILLLSVVPISYLCTYYAT) form a helical membrane-spanning segment. Residues 252–295 (QKQNEFTCALGASPDGPVGSAGPTVRVSCKLPSVQLQRIIAGVD) lie on the Extracellular side of the membrane. Residues 296–316 (IVLLCFMNLIILVNLIHLFIF) traverse the membrane as a helical segment. At 317–617 (RKSNFIFDKL…LGKADPLTIL (301 aa)) the chain is on the cytoplasmic side. A compositionally biased stretch (polar residues) spans 394-408 (TTPTVRDSGIQTVDP). 2 disordered regions span residues 394–425 (TTPTVRDSGIQTVDPSINPAEPDGSAEPPVVK) and 485–512 (AHHYKGSGGDSGPSSAPPAASEKKHTRH). Phosphoserine is present on residues Ser-593 and Ser-604.

The protein belongs to the pannexin family. As to quaternary structure, homoheptameric. Post-translationally, S-palmitoylated in neural stem and progenitor cells. In terms of processing, cleaved by CASP3 and CASP7 during apoptosis. Cleavage has no effect on it function. As to expression, expression is enriched in central nervous system. Expressed in suprabasal layers of skin epidermis. In terms of tissue distribution, more aboundantly expressed in skin.

It is found in the cell membrane. Its subcellular location is the golgi apparatus membrane. The protein localises to the endoplasmic reticulum membrane. It carries out the reaction ATP(in) = ATP(out). The catalysed reaction is chloride(in) = chloride(out). The enzyme catalyses iodide(out) = iodide(in). It catalyses the reaction Na(+)(in) = Na(+)(out). It carries out the reaction D-gluconate(in) = D-gluconate(out). Its function is as follows. Ion channel with a slight anion preference. Also able to release ATP. Plays a role in regulating neurogenesis and apoptosis in keratinocytes. The sequence is that of Pannexin-2 (Panx2) from Mus musculus (Mouse).